A 267-amino-acid chain; its full sequence is Imidazole glycerol phosphate synthase subunit HisF (267 aa).

Residues aspartate 22 and aspartate 141 contribute to the active site.

Belongs to the HisA/HisF family. In terms of assembly, heterodimer of HisH and HisF.

The protein localises to the cytoplasm. It catalyses the reaction 5-[(5-phospho-1-deoxy-D-ribulos-1-ylimino)methylamino]-1-(5-phospho-beta-D-ribosyl)imidazole-4-carboxamide + L-glutamine = D-erythro-1-(imidazol-4-yl)glycerol 3-phosphate + 5-amino-1-(5-phospho-beta-D-ribosyl)imidazole-4-carboxamide + L-glutamate + H(+). It functions in the pathway amino-acid biosynthesis; L-histidine biosynthesis; L-histidine from 5-phospho-alpha-D-ribose 1-diphosphate: step 5/9. Its function is as follows. IGPS catalyzes the conversion of PRFAR and glutamine to IGP, AICAR and glutamate. The HisF subunit catalyzes the cyclization activity that produces IGP and AICAR from PRFAR using the ammonia provided by the HisH subunit. This Mycobacterium bovis (strain ATCC BAA-935 / AF2122/97) protein is Imidazole glycerol phosphate synthase subunit HisF.